The chain runs to 528 residues: Phosphoenolpyruvate carboxykinase (ATP) (528 aa).

Substrate contacts are provided by Arg56, Tyr192, and Lys198. ATP is bound by residues Lys198, His217, and 233-241; that span reads GLSGTGKTT. Residues Lys198 and His217 each coordinate Mn(2+). Asp254 provides a ligand contact to Mn(2+). ATP-binding residues include Glu282, Arg319, and Thr444. Substrate is bound at residue Arg319.

This sequence belongs to the phosphoenolpyruvate carboxykinase (ATP) family. Mn(2+) is required as a cofactor.

It localises to the cytoplasm. It catalyses the reaction oxaloacetate + ATP = phosphoenolpyruvate + ADP + CO2. The protein operates within carbohydrate biosynthesis; gluconeogenesis. In terms of biological role, involved in the gluconeogenesis. Catalyzes the conversion of oxaloacetate (OAA) to phosphoenolpyruvate (PEP) through direct phosphoryl transfer between the nucleoside triphosphate and OAA. This Bacillus cytotoxicus (strain DSM 22905 / CIP 110041 / 391-98 / NVH 391-98) protein is Phosphoenolpyruvate carboxykinase (ATP).